Here is a 102-residue protein sequence, read N- to C-terminus: Large ribosomal subunit protein uL24 (102 aa).

Belongs to the universal ribosomal protein uL24 family. Part of the 50S ribosomal subunit.

In terms of biological role, one of two assembly initiator proteins, it binds directly to the 5'-end of the 23S rRNA, where it nucleates assembly of the 50S subunit. Functionally, one of the proteins that surrounds the polypeptide exit tunnel on the outside of the subunit. The chain is Large ribosomal subunit protein uL24 from Alcanivorax borkumensis (strain ATCC 700651 / DSM 11573 / NCIMB 13689 / SK2).